The primary structure comprises 577 residues: Protein CBFA2T1 (577 aa).

The span at 1–10 shows a compositional bias: basic and acidic residues; that stretch reads MPDRTEKHST. The segment at 1-87 is disordered; that stretch reads MPDRTEKHST…SSSSLANQQL (87 aa). S14 is modified (phosphoserine). Polar residues predominate over residues 42–59; the sequence is SSFTPTTLTNGTSHSPTA. A compositionally biased stretch (low complexity) spans 68-87; it reads NGFSNGPSSSSSSSLANQQL. Positions 93 to 188 constitute a TAFH domain; sequence ARQLSKLKRF…NPAQYLAQHE (96 aa). The interval 203–271 is disordered; it reads SELLLDVNEN…LPHPTPPPPQ (69 aa). Residues 211–237 show a composition bias toward basic and acidic residues; sequence ENGKRRTPDRTKENGFDREPLHSEHPS. Positions 244 to 258 are enriched in polar residues; sequence SPGQRYSPNNGLSYQ. Pro residues predominate over residues 262-271; sequence LPHPTPPPPQ. The segment at 310 to 356 is important for oligomerization; that stretch reads QEEMIDHRLTDREWAEEWKHLDHLLNCIMDMVEKTRRSLTVLRRCQE. A nervy homology region 2 (NHR2) region spans residues 310–356; it reads QEEMIDHRLTDREWAEEWKHLDHLLNCIMDMVEKTRRSLTVLRRCQE. The interval 374 to 396 is disordered; sequence DLKKGGSSSSSHSRQQSPVNPDP. Over residues 380–390 the composition is skewed to low complexity; sequence SSSSSHSRQQS. At S390 the chain carries Phosphoserine. The tract at residues 416–465 is nervy homology region 3 (NHR3); that stretch reads EEIWKKAEEAVNEVKRQAMTELQKAVSEAERKAHDMITTERAKMERTVAE. 8 residues coordinate Zn(2+): C488, C491, C499, C502, C508, C512, H520, and C524. Residues 488–524 form an MYND-type zinc finger; the sequence is CWNCGRKASETCSGCNTARYCGSFCQHKDWEKHHHIC. A disordered region spans residues 529 to 577; that stretch reads QAPQQGDTPAVSSSVTPSSGAGSPMDTPPAATPRSTTPGTPSTIETTPR. 2 stretches are compositionally biased toward low complexity: residues 536–553 and 560–577; these read TPAV…GSPM and TPRS…TTPR.

The protein belongs to the CBFA2T family. In terms of assembly, homotetramer. Heterotetramer with CBFA2T2 and CBFA2T3. Interacts with TCF12, SIN3A, HDAC1, HDAC2, HDAC3, NCOR1 and NCOR2. Interacts with ATN1 (via its N-terminus); the interaction enhances the transcriptional repression.

Its subcellular location is the nucleus. In terms of biological role, transcriptional corepressor which facilitates transcriptional repression via its association with DNA-binding transcription factors and recruitment of other corepressors and histone-modifying enzymes. Can repress the expression of MMP7 in a ZBTB33-dependent manner. Can repress transactivation mediated by TCF12. Acts as a negative regulator of adipogenesis. This Mus musculus (Mouse) protein is Protein CBFA2T1 (Runx1t1).